The chain runs to 252 residues: 3-dehydroquinate dehydratase (252 aa).

3-dehydroquinate is bound by residues Ser-21, 46–48, and Arg-82; that span reads EWR. Residue His-143 is the Proton donor/acceptor of the active site. Lys-170 functions as the Schiff-base intermediate with substrate in the catalytic mechanism. Positions 213, 232, and 236 each coordinate 3-dehydroquinate.

Belongs to the type-I 3-dehydroquinase family. As to quaternary structure, homodimer.

It carries out the reaction 3-dehydroquinate = 3-dehydroshikimate + H2O. It participates in metabolic intermediate biosynthesis; chorismate biosynthesis; chorismate from D-erythrose 4-phosphate and phosphoenolpyruvate: step 3/7. In terms of biological role, involved in the third step of the chorismate pathway, which leads to the biosynthesis of aromatic amino acids. Catalyzes the cis-dehydration of 3-dehydroquinate (DHQ) and introduces the first double bond of the aromatic ring to yield 3-dehydroshikimate. The protein is 3-dehydroquinate dehydratase of Escherichia coli O7:K1 (strain IAI39 / ExPEC).